A 741-amino-acid polypeptide reads, in one-letter code: HSP-interacting protein (741 aa).

3 TPR repeats span residues 26 to 59 (SRELKEEGTRLFNRRDFEGAAFKYDKAVQLLPAG), 65 to 100 (AHLRASIAHCYMRMSPAEFHHAIHECNLALEAVPRY), and 102 to 134 (RALLRRAACFEALGRPDLAWGDIRTVLRWEPGN). The disordered stretch occupies residues 168-270 (ASAKGEERKK…GESKQQKHSA (103 aa)). Residues 171–184 (KGEERKKSRNKRFD) are compositionally biased toward basic and acidic residues. Over residues 201–218 (SASTEKQAGPRQTNGTGN) the composition is skewed to polar residues. Basic and acidic residues predominate over residues 219–247 (HQDHTEDSESNGLEKLEQSTETGEKDMGK). The span at 248 to 258 (KRGAHAAGKKP) shows a compositional bias: basic residues. The PB1 domain maps to 285–364 (MKDVKLVFGE…VPIRFYVVEV (80 aa)). TPR repeat units follow at residues 496–530 (EFILEKVNVSYDWACTEYAKAGAMFEEAVKTKSDF), 532–557 (EGLIALGQQKFEQAKLSWYYALACKI), 558–591 (NMETEVLELFNHAEDNMEKGMDMWERMETLRLKG), and 628–663 (SHINILWGTILYERSVVEFNLGLPSWEESLTVAMEK).

As to quaternary structure, interacts (via C-terminus) with O1. Interacts (via C-terminus) with OP10 (via N-terminus).

Its function is as follows. Acts as a co-chaperone for HSP90 and is required for proper folding of the myosin motor domain. The sequence is that of HSP-interacting protein from Zea mays (Maize).